The primary structure comprises 326 residues: Nucleoporin Nup37 (326 aa).

WD repeat units follow at residues 70–117, 122–162, 164–203, and 294–325; these read HHGV…KNEY, GHSD…TAHF, LHSPGMSVCWHPEETFKLMVAEKNGTIRFYDLMAQQAILS, and GSVAVGSGLSWHRTLPLCAVGGDHKLLFWVTE.

Component of the Nup107-160 subcomplex of the nuclear pore complex (NPC). The Nup107-160 subcomplex includes NUP160, NUP133, NUP107, NUP98, NUP85, NUP43, NUP37, SEH1 and SEC13.

Its subcellular location is the chromosome. It is found in the centromere. The protein localises to the kinetochore. The protein resides in the nucleus. It localises to the nuclear pore complex. Component of the Nup107-160 subcomplex of the nuclear pore complex (NPC). The Nup107-160 subcomplex is required for the assembly of a functional NPC. The Nup107-160 subcomplex is also required for normal kinetochore microtubule attachment, mitotic progression and chromosome segregation. The chain is Nucleoporin Nup37 (Nup37) from Mus musculus (Mouse).